A 237-amino-acid polypeptide reads, in one-letter code: Ribosomal RNA large subunit methyltransferase E (237 aa).

Residues Gly76, Trp78, Asp99, Asp115, and Asp139 each coordinate S-adenosyl-L-methionine. The active-site Proton acceptor is Lys179.

It belongs to the class I-like SAM-binding methyltransferase superfamily. RNA methyltransferase RlmE family.

It is found in the cytoplasm. It carries out the reaction uridine(2552) in 23S rRNA + S-adenosyl-L-methionine = 2'-O-methyluridine(2552) in 23S rRNA + S-adenosyl-L-homocysteine + H(+). Its function is as follows. Specifically methylates the uridine in position 2552 of 23S rRNA at the 2'-O position of the ribose in the fully assembled 50S ribosomal subunit. The protein is Ribosomal RNA large subunit methyltransferase E of Rhodopseudomonas palustris (strain ATCC BAA-98 / CGA009).